The following is a 459-amino-acid chain: Probable acetate kinase (459 aa).

Asn-9 lines the Mg(2+) pocket. Lys-16 is a binding site for ATP. Arg-100 contacts substrate. Asp-156 serves as the catalytic Proton donor/acceptor. Residues 216–220 (HLGSG) and 299–301 (DFR) contribute to the ATP site. The tract at residues 308 to 338 (TTTSSPTPSPNPNPNPNPDPNPDPNPDPQNQ) is disordered. Pro residues predominate over residues 314–334 (TPSPNPNPNPNPDPNPDPNPD). Glu-441 serves as a coordination point for Mg(2+).

It belongs to the acetokinase family. The cofactor is Mg(2+).

The enzyme catalyses acetate + ATP = acetyl phosphate + ADP. It functions in the pathway metabolic intermediate biosynthesis; acetyl-CoA biosynthesis; acetyl-CoA from acetate: step 1/2. The protein is Probable acetate kinase of Chaetomium globosum (strain ATCC 6205 / CBS 148.51 / DSM 1962 / NBRC 6347 / NRRL 1970) (Soil fungus).